Consider the following 370-residue polypeptide: 3-dehydroquinate synthase (370 aa).

NAD(+) is bound by residues 108 to 112 (GVIGD), 132 to 133 (TT), Lys-145, and Lys-154. Glu-187, His-249, and His-267 together coordinate Zn(2+).

The protein belongs to the sugar phosphate cyclases superfamily. Dehydroquinate synthase family. Co(2+) serves as cofactor. It depends on Zn(2+) as a cofactor. The cofactor is NAD(+).

It localises to the cytoplasm. It carries out the reaction 7-phospho-2-dehydro-3-deoxy-D-arabino-heptonate = 3-dehydroquinate + phosphate. It participates in metabolic intermediate biosynthesis; chorismate biosynthesis; chorismate from D-erythrose 4-phosphate and phosphoenolpyruvate: step 2/7. Its function is as follows. Catalyzes the conversion of 3-deoxy-D-arabino-heptulosonate 7-phosphate (DAHP) to dehydroquinate (DHQ). In Cereibacter sphaeroides (strain KD131 / KCTC 12085) (Rhodobacter sphaeroides), this protein is 3-dehydroquinate synthase.